The chain runs to 298 residues: 4-hydroxy-tetrahydrodipicolinate synthase (298 aa).

Position 51 (Thr-51) interacts with pyruvate. The active-site Proton donor/acceptor is Tyr-139. Lys-167 serves as the catalytic Schiff-base intermediate with substrate. A pyruvate-binding site is contributed by Ile-209.

Belongs to the DapA family. Homotetramer; dimer of dimers.

The protein resides in the cytoplasm. It catalyses the reaction L-aspartate 4-semialdehyde + pyruvate = (2S,4S)-4-hydroxy-2,3,4,5-tetrahydrodipicolinate + H2O + H(+). The protein operates within amino-acid biosynthesis; L-lysine biosynthesis via DAP pathway; (S)-tetrahydrodipicolinate from L-aspartate: step 3/4. Functionally, catalyzes the condensation of (S)-aspartate-beta-semialdehyde [(S)-ASA] and pyruvate to 4-hydroxy-tetrahydrodipicolinate (HTPA). In Haemophilus influenzae (strain 86-028NP), this protein is 4-hydroxy-tetrahydrodipicolinate synthase.